The chain runs to 207 residues: NADH-ubiquinone oxidoreductase chain 6 (207 aa).

Transmembrane regions (helical) follow at residues 15–35 (ILLD…ILVS), 40–60 (SILY…LIGI), 66–86 (LYIL…LSLF), 116–136 (LFIL…NNIY), and 184–204 (ILLI…IVLT).

It belongs to the complex I subunit 6 family.

It localises to the mitochondrion membrane. It catalyses the reaction a ubiquinone + NADH + 5 H(+)(in) = a ubiquinol + NAD(+) + 4 H(+)(out). Functionally, core subunit of the mitochondrial membrane respiratory chain NADH dehydrogenase (Complex I) that is believed to belong to the minimal assembly required for catalysis. Complex I functions in the transfer of electrons from NADH to the respiratory chain. The immediate electron acceptor for the enzyme is believed to be ubiquinone. This is NADH-ubiquinone oxidoreductase chain 6 (ND6) from Wickerhamomyces canadensis (Yeast).